The sequence spans 345 residues: Phenylalanine--tRNA ligase alpha subunit (345 aa).

Glu266 is a binding site for Mg(2+).

This sequence belongs to the class-II aminoacyl-tRNA synthetase family. Phe-tRNA synthetase alpha subunit type 1 subfamily. As to quaternary structure, tetramer of two alpha and two beta subunits. The cofactor is Mg(2+).

It localises to the cytoplasm. The enzyme catalyses tRNA(Phe) + L-phenylalanine + ATP = L-phenylalanyl-tRNA(Phe) + AMP + diphosphate + H(+). The chain is Phenylalanine--tRNA ligase alpha subunit from Burkholderia lata (strain ATCC 17760 / DSM 23089 / LMG 22485 / NCIMB 9086 / R18194 / 383).